The primary structure comprises 724 residues: MGNNNEFSSGKCPVMHGGMTSAGMASKDWWPNALNLDILHQHDTKTNPMGQQFNYREALKQLDVQALKDDLRALMTDSQPWWPADWGHYGGLMVRMAWHSAGSYRIADGRGGAGTGNQRFAPLNSWPDNVNLDKARRLLWPIKKKYGNKISWADLIVLAGTMAYESMGLKTFGFAFGREDIWHPEIDTYWGSEKEWLAPSGSEGSRYSGERDLENPLAAVMMGLIYVNPEGVDGHPDPQKTANDVRVTFARMAMNDEETVALTAGGHTVGKCHGNGSAANLGAAPEGADLQEQGLGWNNHTTRGIDRDTVSSGIEGAWTSKPTQWDNGYFDMLLGHEWTLTKSPAGAWQWVPIQIAEEDKPVDVEDPSIRLLPIMTDADMAMKVDPTYRQIAERFRQDPAYFSDVFARAWFKLTHRDLGPKSRYFGPDVPQEALIWQDPVPAGRSEYDVAAVKAKIAASGLSIADMVSTAWDSARTFRGSDKRGGANGARIRLAPQNTWEGNEPARLAKVLAVLEPIAAEFNVSVADVIVLAGNLGIEQAAKAAGVAIEVPFAPGRGDATQAMTDEASFEVLEPLADGFRNWLKKDYVVTAEELLLDRAQLMRLTACEMTVLIGGMRVLGANYGGSKVGVFTDRIGVLSNDFFVNLTDMSYTWKPTASNLYEIRERANGALKWTASRVDLVFGSNSILRAYAEVYAQDDNKEKFVRDFVAAWTKVMNADRYDLR.

The tryptophyl-tyrosyl-methioninium (Trp-Tyr) (with M-252) cross-link spans 98 to 226 (WHSAGSYRIA…LAAVMMGLIY (129 aa)). The active-site Proton acceptor is the H99. The segment at residues 226 to 252 (YVNPEGVDGHPDPQKTANDVRVTFARM) is a cross-link (tryptophyl-tyrosyl-methioninium (Tyr-Met) (with W-98)). H267 contacts heme b.

This sequence belongs to the peroxidase family. Peroxidase/catalase subfamily. As to quaternary structure, homodimer or homotetramer. Heme b serves as cofactor. Post-translationally, formation of the three residue Trp-Tyr-Met cross-link is important for the catalase, but not the peroxidase activity of the enzyme.

The catalysed reaction is H2O2 + AH2 = A + 2 H2O. It catalyses the reaction 2 H2O2 = O2 + 2 H2O. Functionally, bifunctional enzyme with both catalase and broad-spectrum peroxidase activity. The protein is Catalase-peroxidase of Edwardsiella tarda.